A 173-amino-acid polypeptide reads, in one-letter code: Small ribosomal subunit protein uS11m (173 aa).

This sequence belongs to the universal ribosomal protein uS11 family.

The protein localises to the mitochondrion. This chain is Small ribosomal subunit protein uS11m (RPS11), found in Acanthamoeba castellanii (Amoeba).